Here is a 156-residue protein sequence, read N- to C-terminus: Small ribosomal subunit protein uS7 (156 aa).

The protein belongs to the universal ribosomal protein uS7 family. Part of the 30S ribosomal subunit. Contacts proteins S9 and S11.

Functionally, one of the primary rRNA binding proteins, it binds directly to 16S rRNA where it nucleates assembly of the head domain of the 30S subunit. Is located at the subunit interface close to the decoding center, probably blocks exit of the E-site tRNA. This chain is Small ribosomal subunit protein uS7, found in Myxococcus xanthus (strain DK1622).